The chain runs to 210 residues: MRLRKVKNALLKINQSPYFYSKDKFAKFTKKQLVLELGCGKGTFLIKEAQKNNNFLFIGIEREPTIVLKAINKINKLDFNLENILLLCTDAKQLDDYFQAESVQKIFINFPDPWPKKRHIQRRLTSPDFLKLFWNLLVKNGLIEFKTDNDKLFEYTLTTLQENSQIFEIIHQITDLNNSEFSFQNSITEYEQRFMELEIPIKKLVIKKII.

Residues Glu36, Glu61, Asp90, and Asp112 each coordinate S-adenosyl-L-methionine. Residue Asp112 is part of the active site. Substrate-binding positions include Lys116, Asp148, and 188–191; that span reads TEYE.

Belongs to the class I-like SAM-binding methyltransferase superfamily. TrmB family.

The enzyme catalyses guanosine(46) in tRNA + S-adenosyl-L-methionine = N(7)-methylguanosine(46) in tRNA + S-adenosyl-L-homocysteine. It participates in tRNA modification; N(7)-methylguanine-tRNA biosynthesis. Catalyzes the formation of N(7)-methylguanine at position 46 (m7G46) in tRNA. The protein is tRNA (guanine-N(7)-)-methyltransferase of Mycoplasma genitalium (strain ATCC 33530 / DSM 19775 / NCTC 10195 / G37) (Mycoplasmoides genitalium).